Reading from the N-terminus, the 518-residue chain is Cytochrome P450 monooxygenase atnE (518 aa).

The chain crosses the membrane as a helical span at residues 11 to 31; the sequence is FLAAFAVWMGVVVLAFAIFCV. Asn-184 is a glycosylation site (N-linked (GlcNAc...) asparagine). A heme-binding site is contributed by Cys-458.

This sequence belongs to the cytochrome P450 family. Heme is required as a cofactor.

Its subcellular location is the membrane. Its pathway is secondary metabolite biosynthesis. Cytochrome P450 monooxygenase; part of the gene cluster that mediates the biosynthesis of aspercryptins, linear lipopeptides built from six amino acids including 2 highly unusual and nonproteogenic amino acids, 2-amino-octanoic acid (2aoa) and 2-amino-dodecanol (2adol). The core structure of aspercryptins is as follows: Ser/Ala-Thr-Ile/Val-2aoa-Asn-2adol. The first step of aspercryptin biosynthesis is the generation of the fatty acid precursors, octanoic and dodecanoic acids, by the FAS subunits atnF and atnM. The fatty acid precursors are likely transformed into the corresponding alpha-amino fatty acids in three steps. First, they are hydroxylated by the cytochrome P450 monooxygenase atnE, then oxidized to the corresponding alpha-keto acids by the NAD(P)-dependent oxidoreductase atnD, and finally converted to the alpha-amino fatty acids by the PLP-dependent aminotransferases atnH or atnJ. the alpha-amino fatty acids, 2-amino-octanoic and 2-amino-dodecanoic acids, are recognized, activated, and covalently tethered to the NRPS atnA by its fourth and sixth adenylation domains. The second module of atnA is the Thr module and contains an epimerase (E) domain responsible for the epimerization of Thr to D-allo-Thr. Additionally, despite atnA having only one epimerase domain, the first amino acid of aspercryptin A1 is D-Ser, suggesting that serine is either loaded directly as D-Ser on the first module or that the epimerase domain in the threonine module epimerizes both L-Ser and L-Thr. After condensation of the hexapeptide of aspercryptin, the C-terminal reductase (TE) domain might be involved in the reductive release and production of the aldehyde hexapeptide. Further reduction would generate aspercryptins. The variety of aspercryptins produced reflects the flexibility of the atnA NRPS, allowing incorporation of alanine instead of serine, valine for isoleucine, and a C10 fatty amino alcohol instead of the C12 version. AtnB seems to be involved in the selectivity for Ile versus Val by the third module. Moreover, type B, C and D aspercryptins have an additional N-terminal cichorine, acetyl and propionyl group respectively. This chain is Cytochrome P450 monooxygenase atnE, found in Emericella nidulans (strain FGSC A4 / ATCC 38163 / CBS 112.46 / NRRL 194 / M139) (Aspergillus nidulans).